The sequence spans 264 residues: Matrilysin (264 aa).

Positions 1-17 (MQLTLFCFVCLLPGHLA) are cleaved as a signal peptide. The propeptide at 18–94 (LPLSQEAGDV…PRCGVPDVAE (77 aa)) is activation peptide. Residues 85 to 92 (PRCGVPDV) carry the Cysteine switch motif. Cys-87 lines the Zn(2+) pocket. Asp-153 contacts Ca(2+). 2 residues coordinate Zn(2+): His-163 and Asp-165. Residues Asp-170, Gly-171, Gly-173, and Thr-175 each contribute to the Ca(2+) site. His-178 lines the Zn(2+) pocket. 3 residues coordinate Ca(2+): Gly-185, Gly-187, and Asp-189. His-191 lines the Zn(2+) pocket. Residues Asp-193 and Glu-196 each contribute to the Ca(2+) site. His-214 provides a ligand contact to Zn(2+). Glu-215 is an active-site residue. Residues His-218 and His-224 each contribute to the Zn(2+) site.

Belongs to the peptidase M10A family. Ca(2+) is required as a cofactor. Requires Zn(2+) as cofactor. In terms of tissue distribution, expressed in the intestinal epithelium (at protein level).

Its subcellular location is the secreted. It localises to the extracellular space. The protein localises to the extracellular matrix. It catalyses the reaction Cleavage of 14-Ala-|-Leu-15 and 16-Tyr-|-Leu-17 in B chain of insulin. No action on collagen types I, II, IV, V. Cleaves gelatin chain alpha2(I) &gt; alpha1(I).. In terms of biological role, degrades casein, gelatins of types I, III, IV, and V, and fibronectin. Activates procollagenase. May play a role in tissue reorganization. This is Matrilysin (Mmp7) from Mus musculus (Mouse).